Consider the following 383-residue polypeptide: Anhydro-N-acetylmuramic acid kinase (383 aa).

ATP is bound at residue 9–16 (GTSLDGID).

Belongs to the anhydro-N-acetylmuramic acid kinase family.

The enzyme catalyses 1,6-anhydro-N-acetyl-beta-muramate + ATP + H2O = N-acetyl-D-muramate 6-phosphate + ADP + H(+). Its pathway is amino-sugar metabolism; 1,6-anhydro-N-acetylmuramate degradation. It participates in cell wall biogenesis; peptidoglycan recycling. Catalyzes the specific phosphorylation of 1,6-anhydro-N-acetylmuramic acid (anhMurNAc) with the simultaneous cleavage of the 1,6-anhydro ring, generating MurNAc-6-P. Is required for the utilization of anhMurNAc either imported from the medium or derived from its own cell wall murein, and thus plays a role in cell wall recycling. The polypeptide is Anhydro-N-acetylmuramic acid kinase (Clostridioides difficile (strain 630) (Peptoclostridium difficile)).